The chain runs to 202 residues: Protein Nef (202 aa).

Gly2 carries N-myristoyl glycine; by host lipidation. A Phosphoserine; by host modification is found at Ser6. The acidic; interacts with host PACS1 and PACS2; stabilizes the interaction of NEF/MHC-I with host AP1M1; necessary for MHC-I internalization stretch occupies residues 62–65 (EEEE). The SH3-binding; interaction with Src family tyrosine kinases stretch occupies residues 69 to 78 (PVTPQVPLRP). The PxxP; stabilizes the interaction of NEF/MHC-I with host AP1M1; necessary for MHC-I internalization motif lies at 72 to 75 (PQVP). The interval 108-124 (DILDLWIYHTQGYFPDW) is mediates dimerization, Nef-PTE1 interaction. Residues 148-180 (VEPDKVEEANKGENTRLLHPVSLHGMDDPEREV) form a binding to ATP6V1H region. The Dileucine internalization motif; necessary for CD4 internalization motif lies at 164 to 165 (LL). The Diacidic; necessary for CD4 internalization signature appears at 174–175 (DD).

It belongs to the lentivirus primate group Nef protein family. Monomer; cytosolic form. Homodimer; membrane bound form. Interacts with Nef associated p21-activated kinase (PAK2); this interaction activates PAK2. Associates with the Nef-MHC-I-AP1 complex; this complex is required for MHC-I internalization. Interacts (via C-terminus) with host PI3-kinase. Interacts with host PACS1; this interaction seems to be weak. Interacts with host PACS2. Interacts with host LCK and MAPK3; these interactions inhibit the kinase activity of the latter. Interacts with host ATP6V1H; this interaction may play a role in CD4 endocytosis. Associates with the CD4-Nef-AP2 complex; this complex is required for CD4 internalization. Interacts with host AP2 subunit alpha and AP2 subunit sigma2. Interacts with TCR-zeta chain; this interaction up-regulates the Fas ligand (FasL) surface expression. Interacts with host HCK, LYN, and SRC; these interactions activate the Src family kinases. Interacts with MAP3K5; this interaction inhibits the Fas and TNFR-mediated death signals. Interacts with beta-COP and PTE1. Interacts with human RACK1; this increases Nef phosphorylation by PKC. Interacts with TP53; this interaction decreases the half-life of TP53, protecting the infected cell against p53-mediated apoptosis. In terms of processing, the virion-associated Nef proteins are cleaved by the viral protease to release the soluble C-terminal core protein. Nef is probably cleaved concomitantly with viral structural proteins on maturation of virus particles. Post-translationally, myristoylated. Phosphorylated on serine residues, probably by host PKCdelta and theta.

It localises to the host cell membrane. The protein resides in the virion. The protein localises to the secreted. Its subcellular location is the host Golgi apparatus membrane. In terms of biological role, factor of infectivity and pathogenicity, required for optimal virus replication. Alters numerous pathways of T-lymphocyte function and down-regulates immunity surface molecules in order to evade host defense and increase viral infectivity. Alters the functionality of other immunity cells, like dendritic cells, monocytes/macrophages and NK cells. In infected CD4(+) T-lymphocytes, down-regulates the surface MHC-I, mature MHC-II, CD4, CD28, CCR5 and CXCR4 molecules. Mediates internalization and degradation of host CD4 through the interaction of with the cytoplasmic tail of CD4, the recruitment of AP-2 (clathrin adapter protein complex 2), internalization through clathrin coated pits, and subsequent transport to endosomes and lysosomes for degradation. Diverts host MHC-I molecules to the trans-Golgi network-associated endosomal compartments by an endocytic pathway to finally target them for degradation. MHC-I down-regulation may involve AP-1 (clathrin adapter protein complex 1) or possibly Src family kinase-ZAP70/Syk-PI3K cascade recruited by PACS2. In consequence infected cells are masked for immune recognition by cytotoxic T-lymphocytes. Decreasing the number of immune receptors also prevents reinfection by more HIV particles (superinfection). Down-regulates host SERINC3 and SERINC5 thereby excluding these proteins from the viral particles. Virion infectivity is drastically higher when SERINC3 or SERINC5 are excluded from the viral envelope, because these host antiviral proteins impair the membrane fusion event necessary for subsequent virion penetration. Functionally, bypasses host T-cell signaling by inducing a transcriptional program nearly identical to that of anti-CD3 cell activation. Interaction with TCR-zeta chain up-regulates the Fas ligand (FasL). Increasing surface FasL molecules and decreasing surface MHC-I molecules on infected CD4(+) cells send attacking cytotoxic CD8+ T-lymphocytes into apoptosis. Its function is as follows. Plays a role in optimizing the host cell environment for viral replication without causing cell death by apoptosis. Protects the infected cells from apoptosis in order to keep them alive until the next virus generation is ready to strike. Inhibits the Fas and TNFR-mediated death signals by blocking MAP3K5/ASK1. Decreases the half-life of TP53, protecting the infected cell against p53-mediated apoptosis. Inhibits the apoptotic signals regulated by the Bcl-2 family proteins through the formation of a Nef/PI3-kinase/PAK2 complex that leads to activation of PAK2 and induces phosphorylation of host BAD. In terms of biological role, extracellular Nef protein targets CD4(+) T-lymphocytes for apoptosis by interacting with CXCR4 surface receptors. The chain is Protein Nef from Human immunodeficiency virus type 1 group M subtype B (isolate Lai) (HIV-1).